The chain runs to 512 residues: Sodium/proline symporter (512 aa).

Helical transmembrane passes span Trp-16–Gly-36, Ile-54–Met-74, Leu-85–Val-105, Ile-139–Ser-159, Phe-174–Ala-194, Phe-200–Asn-220, Leu-240–Phe-260, Ile-286–Phe-306, Val-327–Ser-347, Phe-381–Trp-401, Leu-410–Leu-430, Ala-438–Ile-458, and Ile-467–Val-487.

This sequence belongs to the sodium:solute symporter (SSF) (TC 2.A.21) family.

The protein resides in the cell membrane. It carries out the reaction L-proline(in) + Na(+)(in) = L-proline(out) + Na(+)(out). In terms of biological role, catalyzes the sodium-dependent uptake of extracellular L-proline. Since most S.aureus strains are L-proline auxotrophs, this transporter may aid the bacterial persistence during an infection of tissues with low proline concentrations. In Staphylococcus aureus (strain Newman), this protein is Sodium/proline symporter (putP).